A 62-amino-acid polypeptide reads, in one-letter code: Kininogen-1 (62 aa).

The first 22 residues, 1–22 (MDILKKSLFLVLFLGLVSFSIC), serve as a signal peptide directing secretion. Residues 24–62 (EEKRDTEEEENDDEIEEESEEKKREAPERPPGFTPFRIY) form a disordered region. Residues 30-42 (EEEENDDEIEEES) show a composition bias toward acidic residues. Proline 54 is modified (4-hydroxyproline; partial). Residue tyrosine 62 is modified to Sulfotyrosine.

It belongs to the frog skin active peptide (FSAP) family. Bradykinin-related peptide subfamily. Expressed by the skin glands.

It localises to the secreted. Inhibits ACE with a Ki of 1.6 uM, and targets B2 bradykinin receptor (BDKRB2). Provokes contraction of smooth muscle preparation (ileum). In vivo, induces an early hyperalgesic effects in living rats after intraplantar injection. The protein is Kininogen-1 of Phyllomedusa sauvagei (Sauvage's leaf frog).